Consider the following 529-residue polypeptide: Ell-associated factor Eaf (529 aa).

2 disordered regions span residues 155–235 (AAGS…PMIT) and 253–529 (ANIS…DDDD). Polar residues predominate over residues 167 to 186 (ENSTMRISSKTKVSTGSRRN). Composition is skewed to low complexity over residues 194–215 (RNSP…SPQS), 256–265 (SGSSTGSSSG), 306–315 (HQNQQQQQQN), and 327–346 (QQQH…QQQQ). Ser-196 is modified (phosphoserine). The segment covering 347-359 (RASFSHSNHSNSM) has biased composition (polar residues). The span at 401-416 (DSSDTDSGSDSDDSTD) shows a compositional bias: acidic residues. 4 stretches are compositionally biased toward low complexity: residues 431–451 (HQQQ…HMHQ), 469–480 (QHQQQQQQPPQQ), 488–499 (QQQQQQQQQQQS), and 510–523 (NDLL…SSNS).

It belongs to the EAF family.

It is found in the nucleus. In terms of biological role, promotes transcriptional elongation by Su(Tpl)/ELL. Essential for development. This chain is Ell-associated factor Eaf, found in Drosophila grimshawi (Hawaiian fruit fly).